We begin with the raw amino-acid sequence, 638 residues long: Broad-specificity ulvan lyase (638 aa).

An N-terminal signal peptide occupies residues methionine 1 to alanine 27.

The protein belongs to the polysaccharide lyase 37 family.

The protein localises to the periplasm. It carries out the reaction Endolytic cleavage of (1-&gt;4)-beta-galactosaminic bonds between N-acetylgalactosamine and either D-glucuronic acid or L-iduronic acid to produce a mixture of Delta(4)-unsaturated oligosaccharides of different sizes that are ultimately degraded to Delta(4)-unsaturated tetra- and disaccharides.. It catalyses the reaction Elimination of sulfate, appears to act on linkages between N-acetyl-D-glucosamine and uronate. Product is an unsaturated sugar.. Its function is as follows. Broad-specificity lyase involved in ulvan degradation. Ulvan is the main polysaccharide component of the Ulvales (green seaweed) cell wall. It is composed of disaccharide building blocks comprising 3-sulfated rhamnose (Rha3S) linked to D-glucuronic acid (GlcA), L-iduronic acid (IduA), or D-xylose (Xyl). Ulvan lyase catalyzes the endolytic cleavage of the glycosidic bond between Rha3S and the uronic acids GlcA or IduA, producing oligosaccharides that have unsaturated 4-deoxy-L-threo-hex-4-enopyranosiduronic acid (deltaUA) at the non-reducing end. This results eventually in the degradation of the ulvan polysaccharide into deltaUA-Rha3S disaccharides and deltaUA-Rha3S-Xyl-Rha3S tetrasaccharides. It is also able to degrade the glycosaminoglycans heparan sulfate and chondroitin sulfate. Not active against pectin, xanthan or alginate. This chain is Broad-specificity ulvan lyase, found in Formosa agariphila (strain DSM 15362 / KCTC 12365 / LMG 23005 / KMM 3901 / M-2Alg 35-1).